The following is a 118-amino-acid chain: MCITSLKNQKEFELINKLGQKFYERYFILVIAKKLPKIFLESKYNTFLGIKVSRKLNKKAVVRNKIKRRIRHLMRIIVNDSSVKAIKFAIIIIPRKGFEEINFSHLNYELSKIILRNI.

This sequence belongs to the RnpA family. As to quaternary structure, consists of a catalytic RNA component (M1 or rnpB) and a protein subunit.

The catalysed reaction is Endonucleolytic cleavage of RNA, removing 5'-extranucleotides from tRNA precursor.. RNaseP catalyzes the removal of the 5'-leader sequence from pre-tRNA to produce the mature 5'-terminus. It can also cleave other RNA substrates such as 4.5S RNA. The protein component plays an auxiliary but essential role in vivo by binding to the 5'-leader sequence and broadening the substrate specificity of the ribozyme. The protein is Ribonuclease P protein component of Rickettsia typhi (strain ATCC VR-144 / Wilmington).